Consider the following 434-residue polypeptide: Nicotinate phosphoribosyltransferase (434 aa).

His-242 bears the Phosphohistidine; by autocatalysis mark.

It belongs to the NAPRTase family. Post-translationally, transiently phosphorylated on a His residue during the reaction cycle. Phosphorylation strongly increases the affinity for substrates and increases the rate of nicotinate D-ribonucleotide production. Dephosphorylation regenerates the low-affinity form of the enzyme, leading to product release.

It catalyses the reaction nicotinate + 5-phospho-alpha-D-ribose 1-diphosphate + ATP + H2O = nicotinate beta-D-ribonucleotide + ADP + phosphate + diphosphate. Its pathway is cofactor biosynthesis; NAD(+) biosynthesis; nicotinate D-ribonucleotide from nicotinate: step 1/1. Catalyzes the synthesis of beta-nicotinate D-ribonucleotide from nicotinate and 5-phospho-D-ribose 1-phosphate at the expense of ATP. This is Nicotinate phosphoribosyltransferase from Rhizobium etli (strain ATCC 51251 / DSM 11541 / JCM 21823 / NBRC 15573 / CFN 42).